The chain runs to 232 residues: 2-C-methyl-D-erythritol 4-phosphate cytidylyltransferase (232 aa).

It belongs to the IspD/TarI cytidylyltransferase family. IspD subfamily.

It catalyses the reaction 2-C-methyl-D-erythritol 4-phosphate + CTP + H(+) = 4-CDP-2-C-methyl-D-erythritol + diphosphate. It functions in the pathway isoprenoid biosynthesis; isopentenyl diphosphate biosynthesis via DXP pathway; isopentenyl diphosphate from 1-deoxy-D-xylulose 5-phosphate: step 2/6. Functionally, catalyzes the formation of 4-diphosphocytidyl-2-C-methyl-D-erythritol from CTP and 2-C-methyl-D-erythritol 4-phosphate (MEP). The protein is 2-C-methyl-D-erythritol 4-phosphate cytidylyltransferase of Geobacter metallireducens (strain ATCC 53774 / DSM 7210 / GS-15).